Consider the following 505-residue polypeptide: 2,3-bisphosphoglycerate-independent phosphoglycerate mutase (505 aa).

Residues D13 and S63 each contribute to the Mn(2+) site. Residue S63 is the Phosphoserine intermediate of the active site. Residues H124, 153–154, R183, R189, 254–257, and K330 each bind substrate; these read RD and RADR. The Mn(2+) site is built by D396, H400, D437, H438, and H456.

Belongs to the BPG-independent phosphoglycerate mutase family. In terms of assembly, monomer. Mn(2+) is required as a cofactor.

It carries out the reaction (2R)-2-phosphoglycerate = (2R)-3-phosphoglycerate. Its pathway is carbohydrate degradation; glycolysis; pyruvate from D-glyceraldehyde 3-phosphate: step 3/5. Its function is as follows. Catalyzes the interconversion of 2-phosphoglycerate and 3-phosphoglycerate. This chain is 2,3-bisphosphoglycerate-independent phosphoglycerate mutase, found in Dinoroseobacter shibae (strain DSM 16493 / NCIMB 14021 / DFL 12).